Reading from the N-terminus, the 375-residue chain is UPF0612 protein C569.003 (375 aa).

Belongs to the UPF0612 family.

The protein resides in the cytoplasm. The sequence is that of UPF0612 protein C569.003 from Schizosaccharomyces pombe (strain 972 / ATCC 24843) (Fission yeast).